The sequence spans 213 residues: Probable 26S proteasome regulatory subunit p27 (213 aa).

Residues 1–82 (MDEFKQLDLK…IKKVLEKVFS (82 aa)) adopt a coiled-coil conformation. Residues 120–184 (SKILGRVKPF…TLDVLLIRGY (65 aa)) enclose the PDZ domain.

The protein resides in the cytoplasm. It localises to the nucleus. Its function is as follows. Acts as a chaperone during the assembly of the 26S proteasome, specifically of the base subcomplex of the 19S regulatory complex (RC). The sequence is that of Probable 26S proteasome regulatory subunit p27 (nas2) from Schizosaccharomyces pombe (strain 972 / ATCC 24843) (Fission yeast).